A 205-amino-acid polypeptide reads, in one-letter code: Peptidyl-tRNA hydrolase (205 aa).

TRNA is bound at residue Y14. Catalysis depends on H19, which acts as the Proton acceptor. Y64, N66, and N112 together coordinate tRNA.

Belongs to the PTH family. In terms of assembly, monomer.

It is found in the cytoplasm. The catalysed reaction is an N-acyl-L-alpha-aminoacyl-tRNA + H2O = an N-acyl-L-amino acid + a tRNA + H(+). Hydrolyzes ribosome-free peptidyl-tRNAs (with 1 or more amino acids incorporated), which drop off the ribosome during protein synthesis, or as a result of ribosome stalling. Functionally, catalyzes the release of premature peptidyl moieties from peptidyl-tRNA molecules trapped in stalled 50S ribosomal subunits, and thus maintains levels of free tRNAs and 50S ribosomes. This chain is Peptidyl-tRNA hydrolase, found in Parvibaculum lavamentivorans (strain DS-1 / DSM 13023 / NCIMB 13966).